We begin with the raw amino-acid sequence, 21 residues long: GKFLHSAGKFGKAFLGEVMIG.

As to expression, expressed by the skin glands.

The protein localises to the secreted. Has no antimicrobial activity against tested bacteria. The polypeptide is Magainin-B1 (Xenopus borealis (Kenyan clawed frog)).